Consider the following 157-residue polypeptide: Small ribosomal subunit protein uS7 (157 aa).

The protein belongs to the universal ribosomal protein uS7 family. Part of the 30S ribosomal subunit. Contacts proteins S9 and S11.

In terms of biological role, one of the primary rRNA binding proteins, it binds directly to 16S rRNA where it nucleates assembly of the head domain of the 30S subunit. Is located at the subunit interface close to the decoding center, probably blocks exit of the E-site tRNA. The protein is Small ribosomal subunit protein uS7 of Leptospira borgpetersenii serovar Hardjo-bovis (strain JB197).